The following is a 416-amino-acid chain: MLEQMGIAAKAASYKLALLSSGEKNRVLEKIADELEAQMESILSANVQDVEQARANGLSEAMLDRLALTPARLKAIADDVRQVCNLADPVGQVIDGGLLDSGLRLERRRVPLGVVGVIYEARPNVTVDVASLCLKTGNAVILRGGKETHRTNAATVRVIQKALKACGLPEAAVQAIDNPDRSLVNEMLRMDKYIDMLIPRGGAGLHKLCREQSTIPVITGGIGVCHIFVDSSADIAPALKIIVNAKTQRPSTCNTVETLLVHQDIAERFLPVLSKQMAESGVTLHGDETVMQVLHGPAKLVPLKPEELDNEFLSLDLNVVVVENMDGAIGHIREHGTQHSDAILTCDMHNAARFVNEVDSAAVYVNASTRFTDGGQFGLGAEVAVSTQKLHARGPMGLEALTTYKWIGFGDGTIRA.

It belongs to the gamma-glutamyl phosphate reductase family.

Its subcellular location is the cytoplasm. The enzyme catalyses L-glutamate 5-semialdehyde + phosphate + NADP(+) = L-glutamyl 5-phosphate + NADPH + H(+). It functions in the pathway amino-acid biosynthesis; L-proline biosynthesis; L-glutamate 5-semialdehyde from L-glutamate: step 2/2. In terms of biological role, catalyzes the NADPH-dependent reduction of L-glutamate 5-phosphate into L-glutamate 5-semialdehyde and phosphate. The product spontaneously undergoes cyclization to form 1-pyrroline-5-carboxylate. The chain is Gamma-glutamyl phosphate reductase from Salmonella paratyphi A (strain AKU_12601).